The sequence spans 164 residues: Phosphopantetheine adenylyltransferase (164 aa).

S10 contacts substrate. Residues 10–11 (SF) and H18 contribute to the ATP site. Substrate-binding residues include K42, T79, and R93. ATP-binding positions include 94-96 (GLR), E104, and 129-135 (VRPITAS).

The protein belongs to the bacterial CoaD family. Homohexamer. Mg(2+) is required as a cofactor.

The protein resides in the cytoplasm. It carries out the reaction (R)-4'-phosphopantetheine + ATP + H(+) = 3'-dephospho-CoA + diphosphate. Its pathway is cofactor biosynthesis; coenzyme A biosynthesis; CoA from (R)-pantothenate: step 4/5. In terms of biological role, reversibly transfers an adenylyl group from ATP to 4'-phosphopantetheine, yielding dephospho-CoA (dPCoA) and pyrophosphate. The chain is Phosphopantetheine adenylyltransferase from Bradyrhizobium sp. (strain ORS 278).